The primary structure comprises 353 residues: Putative transport protein aq_740 (353 aa).

Transmembrane regions (helical) follow at residues 4–24 (LSLF…LYLL), 28–48 (FNPI…YGFI), 60–80 (FLVI…FAVI), 156–176 (VYTA…LFFI), 209–229 (VLAV…MGFI), 240–260 (LIWA…AAFV), 268–288 (LFTT…TFLI), and 309–329 (VALF…GVFL).

The protein belongs to the autoinducer-2 exporter (AI-2E) (TC 2.A.86) family.

The protein resides in the cell membrane. The sequence is that of Putative transport protein aq_740 from Aquifex aeolicus (strain VF5).